The primary structure comprises 399 residues: Acetate kinase (399 aa).

Asparagine 7 is a binding site for Mg(2+). Lysine 14 provides a ligand contact to ATP. Arginine 91 provides a ligand contact to substrate. Aspartate 148 (proton donor/acceptor) is an active-site residue. Residues 208-212 (HLGNG), 283-285 (DFR), and 331-335 (GIGEN) each bind ATP. A Mg(2+)-binding site is contributed by glutamate 384.

It belongs to the acetokinase family. In terms of assembly, homodimer. It depends on Mg(2+) as a cofactor. Mn(2+) is required as a cofactor.

It localises to the cytoplasm. It carries out the reaction acetate + ATP = acetyl phosphate + ADP. Its pathway is metabolic intermediate biosynthesis; acetyl-CoA biosynthesis; acetyl-CoA from acetate: step 1/2. In terms of biological role, catalyzes the formation of acetyl phosphate from acetate and ATP. Can also catalyze the reverse reaction. The sequence is that of Acetate kinase from Acetivibrio thermocellus (strain ATCC 27405 / DSM 1237 / JCM 9322 / NBRC 103400 / NCIMB 10682 / NRRL B-4536 / VPI 7372) (Clostridium thermocellum).